We begin with the raw amino-acid sequence, 357 residues long: Protein RecA (357 aa).

67-74 serves as a coordination point for ATP; sequence GPESSGKT. The interval 334–357 is disordered; it reads ELKPAAAGNSHDEDELAGEGKEEF.

Belongs to the RecA family.

The protein localises to the cytoplasm. Its function is as follows. Can catalyze the hydrolysis of ATP in the presence of single-stranded DNA, the ATP-dependent uptake of single-stranded DNA by duplex DNA, and the ATP-dependent hybridization of homologous single-stranded DNAs. It interacts with LexA causing its activation and leading to its autocatalytic cleavage. In Pectobacterium atrosepticum (strain SCRI 1043 / ATCC BAA-672) (Erwinia carotovora subsp. atroseptica), this protein is Protein RecA.